A 255-amino-acid chain; its full sequence is Hydroxyacylglutathione hydrolase (255 aa).

The Zn(2+) site is built by His56, His58, Asp60, His61, His114, Asp133, and His171.

This sequence belongs to the metallo-beta-lactamase superfamily. Glyoxalase II family. In terms of assembly, monomer. It depends on Zn(2+) as a cofactor.

The catalysed reaction is an S-(2-hydroxyacyl)glutathione + H2O = a 2-hydroxy carboxylate + glutathione + H(+). Its pathway is secondary metabolite metabolism; methylglyoxal degradation; (R)-lactate from methylglyoxal: step 2/2. Its function is as follows. Thiolesterase that catalyzes the hydrolysis of S-D-lactoyl-glutathione to form glutathione and D-lactic acid. In Bradyrhizobium sp. (strain BTAi1 / ATCC BAA-1182), this protein is Hydroxyacylglutathione hydrolase.